The following is a 301-amino-acid chain: Cuticle collagen 2 (301 aa).

The N-terminal stretch at 1 to 37 (MDIDARIKAYKFVAYSAVTFSVVAVVSVFITLPMVYN) is a signal peptide. Triple-helical region stretches follow at residues 105-134 (GPPG…PGKG), 153-176 (GPPG…PGSP), 183-212 (GPAG…PGAS), and 215-282 (GGPG…KGIC). Residues 109 to 284 (PGGSPGKPGK…GEGEKGICPK (176 aa)) form a disordered region. Composition is skewed to pro residues over residues 143–170 (TQPP…PGPD) and 179–191 (PSGP…PGPA). The span at 201 to 218 (GAPGGPGEPGASEQGGPG) shows a compositional bias: gly residues. Residues 219-229 (EPGPAGPPGPA) show a composition bias toward pro residues. The span at 252-261 (PGAAGAPGAD) shows a compositional bias: low complexity. Gly residues predominate over residues 262–274 (GNPGGPGTAGKPG).

It belongs to the cuticular collagen family. As to quaternary structure, collagen polypeptide chains are complexed within the cuticle by disulfide bonds and other types of covalent cross-links. In terms of tissue distribution, syncytial dorsal and ventral epidermis.

Its function is as follows. Nematode cuticles are composed largely of collagen-like proteins. The cuticle functions both as an exoskeleton and as a barrier to protect the worm from its environment. The chain is Cuticle collagen 2 (col-2) from Caenorhabditis elegans.